Here is a 207-residue protein sequence, read N- to C-terminus: Small ribosomal subunit protein uS4 (207 aa).

The segment at D30–N54 is disordered. Over residues G42–G53 the composition is skewed to polar residues. Residues S97–L160 enclose the S4 RNA-binding domain.

It belongs to the universal ribosomal protein uS4 family. In terms of assembly, part of the 30S ribosomal subunit. Contacts protein S5. The interaction surface between S4 and S5 is involved in control of translational fidelity.

Its function is as follows. One of the primary rRNA binding proteins, it binds directly to 16S rRNA where it nucleates assembly of the body of the 30S subunit. In terms of biological role, with S5 and S12 plays an important role in translational accuracy. This is Small ribosomal subunit protein uS4 from Cupriavidus taiwanensis (strain DSM 17343 / BCRC 17206 / CCUG 44338 / CIP 107171 / LMG 19424 / R1) (Ralstonia taiwanensis (strain LMG 19424)).